The sequence spans 569 residues: Glutamyl-tRNA reductase (569 aa).

Residues 49-52, Ser109, 114-116, and Gln120 each bind substrate; these read TCNR and EGQ. Cys50 functions as the Nucleophile in the catalytic mechanism. 192–197 provides a ligand contact to NADP(+); that stretch reads GAGSMS. Residues 284-397 form an insert region; the sequence is PVAVREETPA…VEAPRPAPAL (114 aa). The interval 546–569 is disordered; the sequence is AAVSRADDRDTSDSTENAKNRGRE. The segment covering 550–569 has biased composition (basic and acidic residues); sequence RADDRDTSDSTENAKNRGRE.

Belongs to the glutamyl-tRNA reductase family. As to quaternary structure, homodimer.

The enzyme catalyses (S)-4-amino-5-oxopentanoate + tRNA(Glu) + NADP(+) = L-glutamyl-tRNA(Glu) + NADPH + H(+). Its pathway is porphyrin-containing compound metabolism; protoporphyrin-IX biosynthesis; 5-aminolevulinate from L-glutamyl-tRNA(Glu): step 1/2. In terms of biological role, catalyzes the NADPH-dependent reduction of glutamyl-tRNA(Glu) to glutamate 1-semialdehyde (GSA). This Streptomyces avermitilis (strain ATCC 31267 / DSM 46492 / JCM 5070 / NBRC 14893 / NCIMB 12804 / NRRL 8165 / MA-4680) protein is Glutamyl-tRNA reductase.